The primary structure comprises 399 residues: Ankyrin repeat domain-containing protein 65 (399 aa).

10 ANK repeats span residues 40 to 69, 73 to 102, 106 to 135, 139 to 168, 176 to 205, 207 to 231, 235 to 264, 268 to 297, 301 to 330, and 334 to 363; these read QGWGHLLQAVWRGPAGLVTQLLRQGASVEE, AGRTPLHLAVLRGHAPLVRLLLQRGAPVGA, AGRTALHEAAWHGHSRVAELLLQRGASAAA, TGLTPLHWAAALGHTLLAARLLEAPGPGPA, RGWTAAHWAAAGGRLAVLELLAAGGAGLDG, LLVAAAAGRGAALRFLLARGARVDA, AGATALGLAAALGRSQDIEVLLGHGADPGI, HGRSALHRAAARGHLLAVQLLVTQGAEVDA, LGLTPLHHASREGHVEVAGCLLDRGAQVDA, and LRKTPLHLAAERGHGPTVGLLLSRGASPTL. The tract at residues 377–399 is disordered; sequence DLPQALPELGGGEKECEGIESTG.

This chain is Ankyrin repeat domain-containing protein 65 (ANKRD65), found in Homo sapiens (Human).